The chain runs to 151 residues: Deoxyuridine 5'-triphosphate nucleotidohydrolase (151 aa).

Residues 70-72 (RSG), N83, 87-89 (LID), and M97 contribute to the substrate site.

The protein belongs to the dUTPase family. It depends on Mg(2+) as a cofactor.

It catalyses the reaction dUTP + H2O = dUMP + diphosphate + H(+). The protein operates within pyrimidine metabolism; dUMP biosynthesis; dUMP from dCTP (dUTP route): step 2/2. In terms of biological role, this enzyme is involved in nucleotide metabolism: it produces dUMP, the immediate precursor of thymidine nucleotides and it decreases the intracellular concentration of dUTP so that uracil cannot be incorporated into DNA. In Azotobacter vinelandii (strain DJ / ATCC BAA-1303), this protein is Deoxyuridine 5'-triphosphate nucleotidohydrolase.